The following is a 537-amino-acid chain: CTP synthase (537 aa).

The interval 1-269 (MNQTKYIFVT…DKVALKKLDL (269 aa)) is amidoligase domain. Ser-15 contacts CTP. Ser-15 contributes to the UTP binding site. Position 16–21 (16–21 (SLGKGI)) interacts with ATP. Tyr-56 contacts L-glutamine. Asp-73 is a binding site for ATP. Residues Asp-73 and Glu-143 each coordinate Mg(2+). CTP is bound by residues 150–152 (DIE), 190–195 (KTKPTQ), and Lys-226. UTP-binding positions include 190-195 (KTKPTQ) and Lys-226. In terms of domain architecture, Glutamine amidotransferase type-1 spans 295–537 (SIGLVGKYVE…IAAAVKHKNK (243 aa)). L-glutamine is bound at residue Gly-357. Cys-384 acts as the Nucleophile; for glutamine hydrolysis in catalysis. L-glutamine is bound by residues 385-388 (LGMQ), Glu-408, and Arg-465. Active-site residues include His-510 and Glu-512.

This sequence belongs to the CTP synthase family. In terms of assembly, homotetramer.

It catalyses the reaction UTP + L-glutamine + ATP + H2O = CTP + L-glutamate + ADP + phosphate + 2 H(+). The enzyme catalyses L-glutamine + H2O = L-glutamate + NH4(+). The catalysed reaction is UTP + NH4(+) + ATP = CTP + ADP + phosphate + 2 H(+). It functions in the pathway pyrimidine metabolism; CTP biosynthesis via de novo pathway; CTP from UDP: step 2/2. Its activity is regulated as follows. Allosterically activated by GTP, when glutamine is the substrate; GTP has no effect on the reaction when ammonia is the substrate. The allosteric effector GTP functions by stabilizing the protein conformation that binds the tetrahedral intermediate(s) formed during glutamine hydrolysis. Inhibited by the product CTP, via allosteric rather than competitive inhibition. Catalyzes the ATP-dependent amination of UTP to CTP with either L-glutamine or ammonia as the source of nitrogen. Regulates intracellular CTP levels through interactions with the four ribonucleotide triphosphates. This is CTP synthase from Flavobacterium psychrophilum (strain ATCC 49511 / DSM 21280 / CIP 103535 / JIP02/86).